Consider the following 648-residue polypeptide: Chaperone protein DnaK (648 aa).

The residue at position 200 (threonine 200) is a Phosphothreonine; by autocatalysis. Residues glutamine 612–glutamine 631 form a disordered region.

This sequence belongs to the heat shock protein 70 family.

Functionally, acts as a chaperone. The polypeptide is Chaperone protein DnaK (Burkholderia multivorans (strain ATCC 17616 / 249)).